We begin with the raw amino-acid sequence, 212 residues long: MNSKFIVIEGLEGAGKTSAMKTIVEMLQQHGIQNLIFTREPGGTPLAEKLRGLIKQGVEGEPLTDKAEVLMLYAARVQLVENVIKPALARGTWVVGDRHDLSSQAYQGGGRGIDKNLMTSLRDTVLGDFRPDLTIYLDLPPQIGLLRARERGELDRIEKESMDFFDRTRSRYLEFAAQDKSIVTVDAAQPIEQVQADIYQVLEQWLKQQENG.

Residue 10–17 participates in ATP binding; it reads GLEGAGKT.

This sequence belongs to the thymidylate kinase family.

It catalyses the reaction dTMP + ATP = dTDP + ADP. Phosphorylation of dTMP to form dTDP in both de novo and salvage pathways of dTTP synthesis. This chain is Thymidylate kinase, found in Photorhabdus laumondii subsp. laumondii (strain DSM 15139 / CIP 105565 / TT01) (Photorhabdus luminescens subsp. laumondii).